Consider the following 238-residue polypeptide: Tetraspanin-4 (238 aa).

At 1–13 (MARGCLQGVKYLM) the chain is on the cytoplasmic side. Residues 14 to 34 (FAFNLLFWLGGCGVLGVGIWL) form a helical membrane-spanning segment. Over 35–55 (AATQGNFATLSSSFPSLSAAN) the chain is Extracellular. Residues 56–76 (LLIVTGTFVMAIGFVGCIGAL) form a helical membrane-spanning segment. Residues 77-85 (KENKCLLLT) are Cytoplasmic-facing. The helical transmembrane segment at 86–106 (FFVLLLLVFLLEATIAVLFFA) threads the bilayer. Over 107 to 201 (YSDKIDSYAQ…ETVKAWLQEN (95 aa)) the chain is Extracellular. N-linked (GlcNAc...) asparagine glycans are attached at residues Asn152 and Asn161. The helical transmembrane segment at 202 to 222 (LLAVGIFGLCTALVQILGLTF) threads the bilayer. The Cytoplasmic portion of the chain corresponds to 223–238 (AMTMYCQVVKADTYCA).

It belongs to the tetraspanin (TM4SF) family. As to quaternary structure, forms a complex with integrins.

It localises to the membrane. The protein is Tetraspanin-4 (Tspan4) of Mus musculus (Mouse).